The sequence spans 228 residues: MHIERLDFENSPYLGVYGFATDRVAVIREGLGEKKLATLREVLKVPLIETSVMKSRIVGIFVAGNSNALIVPWYIWDAELDFINAQLREYGIDMEVVPFQSRLTAFGNLILANDKGALVSKDFTREEARKIEDILGVPVERGVIADYTAVGSVGVVTNKGGLVHPEATDEELEWLSDLFKVDVYVGTANMGVPFVGSCMIANSYGVVVGHLTTGPEIVKIEEALGFLG.

The protein belongs to the eIF-6 family.

Its function is as follows. Binds to the 50S ribosomal subunit and prevents its association with the 30S ribosomal subunit to form the 70S initiation complex. The polypeptide is Translation initiation factor 6 (Thermococcus gammatolerans (strain DSM 15229 / JCM 11827 / EJ3)).